The sequence spans 1105 residues: MNFSVLPPEINSALIFAGAGPEPMAAAATAWDGLAMELASAAASFGSVTSGLVGGAWQGASSSAMAAAAAPYAAWLAAAAVQAEQTAAQAAAMIAEFEAVKTAVVQPMLVAANRADLVSLVMSNLFGQNAPAIAAIEATYEQMWAADVSAMSAYHAGASAIASALSPFSKPLQNLAGLPAWLASGAPAAAMTAAAGIPALAGGPTAINLGIANVGGGNVGNANNGLANIGNANLGNYNFGSGNFGNSNIGSASLGNNNIGFGNLGSNNVGVGNLGNLNTGFANTGLGNFGFGNTGNNNIGIGLTGNNQIGIGGLNSGTGNFGLFNSGSGNVGFFNSGNGNFGIGNSGNFNTGGWNSGHGNTGFFNAGSFNTGMLDVGNANTGSLNTGSYNMGDFNPGSSNTGTFNTGNANTGFLNAGNINTGVFNIGHMNNGLFNTGDMNNGVFYRGVGQGSLQFSITTPDLTLPPLQIPGISVPAFSLPAITLPSLTIPAATTPANITVGAFSLPGLTLPSLNIPAATTPANITVGAFSLPGLTLPSLNIPAATTPANITVGAFSLPGLTLPSLNIPAATTPANITVGAFSLPGLTLPSLNIPAATTPANITVGAFSLPGLTLPSLNIPAATTPANITVGAFSLPGLTLPSLNIPAATTPANITVGAFSLPGLTLPSLNIPAATTPANITVSGFQLPPLSIPSVAIPPVTVPPITVGAFNLPPLQIPEVTIPQLTIPAGITIGGFSLPAIHTQPITVGQIGVGQFGLPSIGWDVFLSTPRITVPAFGIPFTLQFQTNVPALQPPGGGLSTFTNGALIFGEFDLPQLVVHPYTLTGPIVIGSFFLPAFNIPGIDVPAINVDGFTLPQITTPAITTPEFAIPPIGVGGFTLPQITTQEIITPELTINSIGVGGFTLPQITTPPITTPPLTIDPINLTGFTLPQITTPPITTPPLTIDPINLTGFTLPQITTPPITTPPLTIEPIGVGGFTTPPLTVPGIHLPSTTIGAFAIPGGPGYFNSSTAPSSGFFNSGAGGNSGFGNNGSGLSGWFNTNPAGLLGGSGYQNFGGLSSGFSNLGSGVSGFANRGILPFSVASVVSGFANIGTNLAGFFQGTTS.

Belongs to the mycobacterial PPE family.

This is an uncharacterized protein from Mycobacterium tuberculosis (strain CDC 1551 / Oshkosh).